The following is a 124-amino-acid chain: Large ribosomal subunit protein bL20c (124 aa).

Belongs to the bacterial ribosomal protein bL20 family.

Its subcellular location is the plastid. The protein resides in the chloroplast. In terms of biological role, binds directly to 23S ribosomal RNA and is necessary for the in vitro assembly process of the 50S ribosomal subunit. It is not involved in the protein synthesizing functions of that subunit. This chain is Large ribosomal subunit protein bL20c, found in Stigeoclonium helveticum (Green alga).